The following is a 400-amino-acid chain: Elongation factor Tu (400 aa).

One can recognise a tr-type G domain in the interval 10-209 (KPHINIGTIG…AVDDYIPTPE (200 aa)). Positions 19 to 26 (GHVDHGKT) are G1. A GTP-binding site is contributed by 19 to 26 (GHVDHGKT). Residue Thr-26 coordinates Mg(2+). A G2 region spans residues 60–64 (GITIS). The tract at residues 81-84 (DCPG) is G3. GTP is bound by residues 81–85 (DCPGH) and 136–139 (NKVD). Residues 136–139 (NKVD) are G4. A G5 region spans residues 174-176 (SAK).

It belongs to the TRAFAC class translation factor GTPase superfamily. Classic translation factor GTPase family. EF-Tu/EF-1A subfamily. Monomer.

Its subcellular location is the cytoplasm. The enzyme catalyses GTP + H2O = GDP + phosphate + H(+). GTP hydrolase that promotes the GTP-dependent binding of aminoacyl-tRNA to the A-site of ribosomes during protein biosynthesis. This Herpetosiphon aurantiacus (Herpetosiphon giganteus) protein is Elongation factor Tu.